The chain runs to 455 residues: Ribulose bisphosphate carboxylase large chain (455 aa).

Position 5 is an N6,N6,N6-trimethyllysine (Lys5). 2 residues coordinate substrate: Asn114 and Thr164. The active-site Proton acceptor is Lys166. Residue Lys168 coordinates substrate. Mg(2+) is bound by residues Lys192, Asp194, and Glu195. Lys192 carries the N6-carboxylysine modification. His285 acts as the Proton acceptor in catalysis. 3 residues coordinate substrate: Arg286, His318, and Ser370.

The protein belongs to the RuBisCO large chain family. Type I subfamily. In terms of assembly, heterohexadecamer of 8 large chains and 8 small chains; disulfide-linked. The disulfide link is formed within the large subunit homodimers. Mg(2+) is required as a cofactor. The disulfide bond which can form in the large chain dimeric partners within the hexadecamer appears to be associated with oxidative stress and protein turnover.

The protein resides in the plastid. The protein localises to the chloroplast. The catalysed reaction is 2 (2R)-3-phosphoglycerate + 2 H(+) = D-ribulose 1,5-bisphosphate + CO2 + H2O. It catalyses the reaction D-ribulose 1,5-bisphosphate + O2 = 2-phosphoglycolate + (2R)-3-phosphoglycerate + 2 H(+). Functionally, ruBisCO catalyzes two reactions: the carboxylation of D-ribulose 1,5-bisphosphate, the primary event in carbon dioxide fixation, as well as the oxidative fragmentation of the pentose substrate in the photorespiration process. Both reactions occur simultaneously and in competition at the same active site. This is Ribulose bisphosphate carboxylase large chain from Lupinus nanus (Sky lupine).